Here is a 523-residue protein sequence, read N- to C-terminus: Calcium uptake protein 3, mitochondrial (523 aa).

The N-terminal 6 residues, 1 to 6, are a transit peptide targeting the mitochondrion; it reads MAALRR. Residues 226–261 form the EF-hand 1 domain; the sequence is PHAGFRIAFNMFDTDGNEMVDKKEFLVLQEIFRKKN. Residues Asp238, Asp240, Asn242, Met244, Asp246, and Glu249 each coordinate Ca(2+). The EF-hand 2; degenerate domain maps to 395–430; the sequence is ENTSVFLENVRYSISEEKGITFDEFRSFFQFLNNLE. Residues 464 to 499 form the EF-hand 3 domain; sequence SPHLVNTVFKIFDVDKDDQLSYKEFIGIMKDRLHRG. Residues Asp476, Asp478, Asp480, Gln482, and Glu487 each contribute to the Ca(2+) site.

It belongs to the MICU1 family. MICU3 subfamily. Heterodimer; disulfide-linked; heterodimerizes with MICU1. Heterodimerizes with isoform 3 of MICU1 (MICU1.1) in skeletal muscle. Component of the uniplex complex, composed of MCU, EMRE/SMDT1, MICU1 and MICU3 in a 4:4:1:1 stoichiometry. In terms of tissue distribution, predominantly expressed in skeletal muscle and central nervous system.

The protein localises to the mitochondrion intermembrane space. It is found in the mitochondrion inner membrane. Tissue-specific calcium sensor of the mitochondrial calcium uniporter (MCU) channel, which specifically regulates MCU channel activity in the central nervous system and skeletal muscle. Senses calcium level via its EF-hand domains: compared to MICU1 and MICU2, MICU3 has a higher affinity for calcium. MICU1 and MICU3 form a disulfide-linked heterodimer that stimulates and inhibits MCU activity, depending on the concentration of calcium. At low calcium levels, MICU1 occludes the pore of the MCU channel, preventing mitochondrial calcium uptake. At higher calcium levels, calcium-binding to MICU1 and MICU3 induces a conformational change that weakens MCU-MICU1 interactions and moves the MICU1-MICU3 heterodimer away from the pore, allowing calcium permeation through the MCU channel. The high calcium affinity of MICU3 lowers the calcium threshold necessary for calcium permeation through the MCU channel. The MICU1-MICU3 heterodimer promotes flexibility of neurotransmission in neuronal cells by enhancing mitochondrial calcium uptake in presynapses. It is also required to increase mitochondrial calcium uptake in skeletal muscle cells, thereby increasing ATP production. This is Calcium uptake protein 3, mitochondrial from Mus musculus (Mouse).